A 270-amino-acid chain; its full sequence is Putative pyruvate, phosphate dikinase regulatory protein (270 aa).

Residue 149 to 156 (GVSRTSKT) participates in ADP binding.

Belongs to the pyruvate, phosphate/water dikinase regulatory protein family. PDRP subfamily.

It catalyses the reaction N(tele)-phospho-L-histidyl/L-threonyl-[pyruvate, phosphate dikinase] + ADP = N(tele)-phospho-L-histidyl/O-phospho-L-threonyl-[pyruvate, phosphate dikinase] + AMP + H(+). The enzyme catalyses N(tele)-phospho-L-histidyl/O-phospho-L-threonyl-[pyruvate, phosphate dikinase] + phosphate + H(+) = N(tele)-phospho-L-histidyl/L-threonyl-[pyruvate, phosphate dikinase] + diphosphate. Bifunctional serine/threonine kinase and phosphorylase involved in the regulation of the pyruvate, phosphate dikinase (PPDK) by catalyzing its phosphorylation/dephosphorylation. The protein is Putative pyruvate, phosphate dikinase regulatory protein of Sphingopyxis alaskensis (strain DSM 13593 / LMG 18877 / RB2256) (Sphingomonas alaskensis).